Reading from the N-terminus, the 133-residue chain is Ribosomal silencing factor RsfS (133 aa).

It belongs to the Iojap/RsfS family. As to quaternary structure, interacts with ribosomal protein uL14 (rplN).

The protein localises to the cytoplasm. Functions as a ribosomal silencing factor. Interacts with ribosomal protein uL14 (rplN), blocking formation of intersubunit bridge B8. Prevents association of the 30S and 50S ribosomal subunits and the formation of functional ribosomes, thus repressing translation. This chain is Ribosomal silencing factor RsfS, found in Zymomonas mobilis subsp. mobilis (strain ATCC 31821 / ZM4 / CP4).